Here is a 360-residue protein sequence, read N- to C-terminus: Cyclin-Y-like protein 2 (360 aa).

In terms of domain architecture, Cyclin N-terminal spans 204-286 (RLTAEFAIVS…FLKLINYNIG (83 aa)).

Belongs to the cyclin family. Cyclin Y subfamily.

This chain is Cyclin-Y-like protein 2 (CCNYL2), found in Macaca fascicularis (Crab-eating macaque).